The primary structure comprises 141 residues: Hemoglobin subunit alpha-D (141 aa).

Residues 1 to 141 (MLTADDKKLI…VASVLAEKYR (141 aa)) enclose the Globin domain. Heme b-binding residues include His-58 and His-87.

It belongs to the globin family. In terms of assembly, heterotetramer of two alpha-D chains and two beta chains. As to expression, red blood cells.

In terms of biological role, involved in oxygen transport from the lung to the various peripheral tissues. In Rhea americana (Greater rhea), this protein is Hemoglobin subunit alpha-D (HBAD).